The sequence spans 855 residues: Discoidin domain-containing receptor 2 (855 aa).

The first 21 residues, 1-21 (MILIPRMLLVLFLLLPILSSA), serve as a signal peptide directing secretion. The Extracellular portion of the chain corresponds to 22–399 (KAQVNPAICR…MLKVDDSNTR (378 aa)). One can recognise an F5/8 type C domain in the interval 30-185 (CRYPLGMSGG…VCMRVELYGC (156 aa)). Cystine bridges form between cysteine 30–cysteine 185 and cysteine 73–cysteine 177. N-linked (GlcNAc...) asparagine glycans are attached at residues asparagine 121, asparagine 213, asparagine 261, asparagine 280, and asparagine 372. Residues 400–421 (ILIGCLVAIIFILLAIIVIILW) traverse the membrane as a helical segment. Residues 422 to 855 (RQFWQKMLEK…HLLLLQQGDE (434 aa)) are Cytoplasmic-facing. The segment at 452–471 (SMFNNNRSSSPSEQGSNSTY) is disordered. Tyrosine 471 bears the Phosphotyrosine; by SRC and autocatalysis mark. The region spanning 563–849 (LTFKEKLGEG…PSFQEIHLLL (287 aa)) is the Protein kinase domain. ATP contacts are provided by residues 569–577 (LGEGQFGEV) and lysine 608. Aspartate 710 acts as the Proton acceptor in catalysis. Phosphotyrosine; by SRC and autocatalysis is present on residues tyrosine 736, tyrosine 740, and tyrosine 741.

The protein belongs to the protein kinase superfamily. Tyr protein kinase family. Insulin receptor subfamily. As to quaternary structure, binds hydroxyproline-rich sequence motifs in fibrillar, glycosylated collagen, such as the GQOGVMGFO motif, where O stands for hydroxyproline. Interacts with SRC. Interacts (tyrosine phosphorylated) with SHC1. In terms of processing, N-glycosylated. Post-translationally, tyrosine phosphorylated in response to collagen binding. Phosphorylated by SRC; this is required for activation and subsequent autophosphorylation on additional tyrosine residues. In terms of tissue distribution, detected in osteocytes, osteoblastic cells in subchondral bone, bone lining cells, tibia and cartilage (at protein level). Detected at high levels in heart and lung, and at low levels in brain, placenta, liver, skeletal muscle, pancreas, and kidney.

The protein localises to the cell membrane. The catalysed reaction is L-tyrosyl-[protein] + ATP = O-phospho-L-tyrosyl-[protein] + ADP + H(+). With respect to regulation, present in an inactive state in the absence of collagen binding and phosphorylation by SRC. Tyrosine phosphorylation enhances the affinity for ATP and the catalytic activity. In terms of biological role, tyrosine kinase involved in the regulation of tissues remodeling. It functions as a cell surface receptor for fibrillar collagen and regulates cell differentiation, remodeling of the extracellular matrix, cell migration and cell proliferation. Required for normal bone development. Regulates osteoblast differentiation and chondrocyte maturation via a signaling pathway that involves MAP kinases and leads to the activation of the transcription factor RUNX2. Regulates remodeling of the extracellular matrix by up-regulation of the collagenases MMP1, MMP2 and MMP13, and thereby facilitates cell migration and tumor cell invasion. Promotes fibroblast migration and proliferation, and thereby contributes to cutaneous wound healing. In Homo sapiens (Human), this protein is Discoidin domain-containing receptor 2 (DDR2).